We begin with the raw amino-acid sequence, 178 residues long: Ribonuclease M5 (178 aa).

Positions 10-94 constitute a Toprim domain; sequence DGVIVCEGKT…YVDMNARLKN (85 aa). 3 residues coordinate Mg(2+): glutamate 16, aspartate 62, and aspartate 64.

It belongs to the ribonuclease M5 family. Mg(2+) is required as a cofactor.

Its subcellular location is the cytoplasm. The catalysed reaction is Endonucleolytic cleavage of RNA, removing 21 and 42 nucleotides, respectively, from the 5'- and 3'-termini of a 5S-rRNA precursor.. Functionally, required for correct processing of both the 5' and 3' ends of 5S rRNA precursor. Cleaves both sides of a double-stranded region yielding mature 5S rRNA in one step. This is Ribonuclease M5 (rnmV) from Mycoplasma genitalium (strain ATCC 33530 / DSM 19775 / NCTC 10195 / G37) (Mycoplasmoides genitalium).